The sequence spans 226 residues: uncharacterized protein (226 aa).

The region spanning 71–207 (EPDDITVYFD…ADGLAKKILS (137 aa)) is the RNase H type-1 domain.

This is an uncharacterized protein from Bacillus subtilis (strain 168).